Here is a 452-residue protein sequence, read N- to C-terminus: tRNA modification GTPase MnmE (452 aa).

Residues Arg-21, Glu-78, and Lys-118 each coordinate (6S)-5-formyl-5,6,7,8-tetrahydrofolate. One can recognise a TrmE-type G domain in the interval 214-375 (GMKVVIAGRP…LREHLKKSMG (162 aa)). Asn-224 contributes to the K(+) binding site. GTP contacts are provided by residues 224–229 (NAGKSS), 243–249 (TNIAGTT), and 268–271 (DTAG). Ser-228 is a binding site for Mg(2+). K(+) contacts are provided by Thr-243, Ile-245, and Thr-248. Thr-249 lines the Mg(2+) pocket. Lys-452 lines the (6S)-5-formyl-5,6,7,8-tetrahydrofolate pocket.

This sequence belongs to the TRAFAC class TrmE-Era-EngA-EngB-Septin-like GTPase superfamily. TrmE GTPase family. In terms of assembly, homodimer. Heterotetramer of two MnmE and two MnmG subunits. It depends on K(+) as a cofactor.

It is found in the cytoplasm. Exhibits a very high intrinsic GTPase hydrolysis rate. Involved in the addition of a carboxymethylaminomethyl (cmnm) group at the wobble position (U34) of certain tRNAs, forming tRNA-cmnm(5)s(2)U34. The sequence is that of tRNA modification GTPase MnmE from Actinobacillus pleuropneumoniae serotype 3 (strain JL03).